The chain runs to 357 residues: Cobalt-precorrin-5B C(1)-methyltransferase (357 aa).

It belongs to the CbiD family.

It carries out the reaction Co-precorrin-5B + S-adenosyl-L-methionine = Co-precorrin-6A + S-adenosyl-L-homocysteine. The protein operates within cofactor biosynthesis; adenosylcobalamin biosynthesis; cob(II)yrinate a,c-diamide from sirohydrochlorin (anaerobic route): step 6/10. Its function is as follows. Catalyzes the methylation of C-1 in cobalt-precorrin-5B to form cobalt-precorrin-6A. This is Cobalt-precorrin-5B C(1)-methyltransferase from Paramagnetospirillum magneticum (strain ATCC 700264 / AMB-1) (Magnetospirillum magneticum).